We begin with the raw amino-acid sequence, 220 residues long: MADS-box protein AGL24 (220 aa).

Residues 1–61 (MAREKIRIKK…GKLFEFSSSR (61 aa)) enclose the MADS-box domain. The K-box domain maps to 87–177 (LRLENCNLSR…RDKLETLERA (91 aa)). Residues 190–200 (SVTTNVSSYDS) show a composition bias toward polar residues. A disordered region spans residues 190 to 220 (SVTTNVSSYDSGTPLEDDSDTSLKLGLPSWE).

In terms of assembly, interacts with IMK3/MRLK. Forms a homodimer and heterodimer with SOC1, AP1 and SVP through MADS-box domain. Interacts with the SEU-LUG corepressor complex when complexed to AP1. Interacts with AGL15 and AGL16. Phosphorylated by IMK3. Induced by vernalization. In terms of tissue distribution, mostly expressed in shoot apical meristems, including floral meristems. Also detected in stems, seedlings, leaves, flowers and siliques, and, to a lower extent, in roots.

It localises to the nucleus. It is found in the cytoplasm. Its function is as follows. Transcription activator that mediates floral transition in response to vernalization. Promotes inflorescence fate in apical meristems. Acts in a dosage-dependent manner. Probably involved in the transduction of RLK-mediated signaling (e.g. IMK3 pathway). Together with AP1 and SVP, controls the identity of the floral meristem and regulates expression of class B, C and E genes. When associated with SOC1, mediates effect of gibberellins on flowering under short-day conditions, and regulates the expression of LEAFY (LFY), which links floral induction and floral development. Confers inflorescence characteristics to floral primordia and early flowering. This Arabidopsis thaliana (Mouse-ear cress) protein is MADS-box protein AGL24 (AGL24).